Reading from the N-terminus, the 136-residue chain is ATP synthase F(0) complex subunit C1, mitochondrial (136 aa).

The transit peptide at 1-61 (MQTTGALLIS…REFQTSVVSR (61 aa)) directs the protein to the mitochondrion. Residues 77 to 97 (VGVAGSGAGIGTVFGSLIIGY) form a helical membrane-spanning segment. An N6,N6,N6-trimethyllysine modification is found at Lys-104. Residues 112–132 (ILGFALFEAMGLFCLMVAFLI) traverse the membrane as a helical segment.

This sequence belongs to the ATPase C chain family. As to quaternary structure, homooctamer; the c-ring consists of eight c subunits forming a circle, and each subunit adopts a hairpin shape. Component of the ATP synthase complex composed at least of ATP5F1A/subunit alpha, ATP5F1B/subunit beta, ATP5MC1/subunit c (homooctomer), MT-ATP6/subunit a, MT-ATP8/subunit 8, ATP5ME/subunit e, ATP5MF/subunit f, ATP5MG/subunit g, ATP5MK/subunit k, ATP5MJ/subunit j, ATP5F1C/subunit gamma, ATP5F1D/subunit delta, ATP5F1E/subunit epsilon, ATP5PF/subunit F6, ATP5PB/subunit b, ATP5PD/subunit d, ATP5PO/subunit OSCP. ATP synthase complex consists of a soluble F(1) head domain (subunits alpha(3) and beta(3)) - the catalytic core - and a membrane F(0) domain - the membrane proton channel (subunits c, a, 8, e, f, g, k and j). These two domains are linked by a central stalk (subunits gamma, delta, and epsilon) rotating inside the F1 region and a stationary peripheral stalk (subunits F6, b, d, and OSCP). Interacts with TMEM70 (homooligomer form); this interaction facilitates the oligomer formation of subunit c/ATP5MC1 (c-ring) and the c-ring membrane insertion and also protects ATP5MC1 against intramitochondrial proteolysis. In terms of processing, trimethylated by ATPSCKMT at Lys-104. Methylation is required for proper incorporation of the C subunit into the ATP synthase complex and mitochondrial respiration.

The protein localises to the mitochondrion membrane. The catalysed reaction is H(+)(in) = H(+)(out). In terms of biological role, subunit c, of the mitochondrial membrane ATP synthase complex (F(1)F(0) ATP synthase or Complex V) that produces ATP from ADP in the presence of a proton gradient across the membrane which is generated by electron transport complexes of the respiratory chain. ATP synthase complex consist of a soluble F(1) head domain - the catalytic core - and a membrane F(1) domain - the membrane proton channel. These two domains are linked by a central stalk rotating inside the F(1) region and a stationary peripheral stalk. During catalysis, ATP synthesis in the catalytic domain of F(1) is coupled via a rotary mechanism of the central stalk subunits to proton translocation. With the subunit a (MT-ATP6), forms the proton-conducting channel in the F(0) domain, that contains two crucial half-channels (inlet and outlet) that facilitate proton movement from the mitochondrial intermembrane space (IMS) into the matrix. Protons are taken up via the inlet half-channel and released through the outlet half-channel, following a Grotthuss mechanism. The sequence is that of ATP synthase F(0) complex subunit C1, mitochondrial from Sus scrofa (Pig).